A 451-amino-acid chain; its full sequence is MSNVIENLGKLDRKVTLAIPKAEVEKEKQDRLVRLSKTVKMSGFRPGKVPMKMVEKQYGQQVEFEVRFDKAARKFFDITKEQDVKVAGQPKFEIKTEGVGEDEVAFDATFEVYPEVKLGDLTGAEVTRTKTEITDAEIDKTIDILRKQRVHYHVRGEAGEHGDGGGDVTAQNGDRVTLDFVGKIEGVEFAGGKAEDFPFVLGEGRMLPEFEAATLGLKVGESKSFPLSFPADYHGKDVAGKTAEFTVTLKKIEWAHLPEVNDAFAKSLGIADGNVDKMRADIRENLEREVKRRTHAMLKDQVMEALLKVSELDVPKALIEQDQERLVEMARRDLEQRGMPNAKDMPIPAEMFAQQAERRVKLGLILAEIVKAHGLEAKADQIKAEIEDFAKSYEDPKEVMRWYYGDQQRLAEMEAYVLENNVVNFVCDKAKVTDKSVSFEELTAEGNAQQA.

Residues 173–258 enclose the PPIase FKBP-type domain; it reads GDRVTLDFVG…LKKIEWAHLP (86 aa).

Belongs to the FKBP-type PPIase family. Tig subfamily.

It localises to the cytoplasm. The catalysed reaction is [protein]-peptidylproline (omega=180) = [protein]-peptidylproline (omega=0). In terms of biological role, involved in protein export. Acts as a chaperone by maintaining the newly synthesized protein in an open conformation. Functions as a peptidyl-prolyl cis-trans isomerase. This is Trigger factor from Cupriavidus pinatubonensis (strain JMP 134 / LMG 1197) (Cupriavidus necator (strain JMP 134)).